The chain runs to 175 residues: Ribulose bisphosphate carboxylase small subunit, chloroplastic (175 aa).

The N-terminal 46 residues, 1 to 46 (MAPSVMASSATTVAPFQGLKSTAGMPVARRSGNSSFGNVSNGGRIR), are a transit peptide targeting the chloroplast. The tract at residues 60-64 (ETLSY) is interaction with large subunit.

It belongs to the RuBisCO small chain family. As to quaternary structure, heterohexadecamer of 8 large and 8 small subunits.

It localises to the plastid. The protein localises to the chloroplast. Functionally, ruBisCO catalyzes two reactions: the carboxylation of D-ribulose 1,5-bisphosphate, the primary event in carbon dioxide fixation, as well as the oxidative fragmentation of the pentose substrate. Both reactions occur simultaneously and in competition at the same active site. Although the small subunit is not catalytic it is essential for maximal activity. The protein is Ribulose bisphosphate carboxylase small subunit, chloroplastic of Oryza sativa subsp. indica (Rice).